The primary structure comprises 261 residues: Pyridoxine 5'-phosphate synthase (261 aa).

A 3-amino-2-oxopropyl phosphate-binding site is contributed by N6. 8–9 (DH) provides a ligand contact to 1-deoxy-D-xylulose 5-phosphate. Residue R17 coordinates 3-amino-2-oxopropyl phosphate. The active-site Proton acceptor is H42. 1-deoxy-D-xylulose 5-phosphate contacts are provided by R44 and H49. The Proton acceptor role is filled by E69. T99 is a 1-deoxy-D-xylulose 5-phosphate binding site. H213 (proton donor) is an active-site residue. 3-amino-2-oxopropyl phosphate contacts are provided by residues G214 and 235–236 (GQ).

It belongs to the PNP synthase family. In terms of assembly, homooctamer; tetramer of dimers.

The protein localises to the cytoplasm. It carries out the reaction 3-amino-2-oxopropyl phosphate + 1-deoxy-D-xylulose 5-phosphate = pyridoxine 5'-phosphate + phosphate + 2 H2O + H(+). It participates in cofactor biosynthesis; pyridoxine 5'-phosphate biosynthesis; pyridoxine 5'-phosphate from D-erythrose 4-phosphate: step 5/5. In terms of biological role, catalyzes the complicated ring closure reaction between the two acyclic compounds 1-deoxy-D-xylulose-5-phosphate (DXP) and 3-amino-2-oxopropyl phosphate (1-amino-acetone-3-phosphate or AAP) to form pyridoxine 5'-phosphate (PNP) and inorganic phosphate. This chain is Pyridoxine 5'-phosphate synthase, found in Aliarcobacter butzleri (strain RM4018) (Arcobacter butzleri).